A 349-amino-acid polypeptide reads, in one-letter code: Anthranilate phosphoribosyltransferase (349 aa).

5-phospho-alpha-D-ribose 1-diphosphate-binding positions include glycine 87, 90 to 91 (GD), threonine 95, 97 to 100 (NIST), 115 to 123 (KHGNRSVSS), and serine 127. Glycine 87 lines the anthranilate pocket. A Mg(2+)-binding site is contributed by serine 99. Residue asparagine 118 participates in anthranilate binding. Arginine 173 serves as a coordination point for anthranilate. Residues aspartate 231 and glutamate 232 each coordinate Mg(2+).

The protein belongs to the anthranilate phosphoribosyltransferase family. Homodimer. It depends on Mg(2+) as a cofactor.

It catalyses the reaction N-(5-phospho-beta-D-ribosyl)anthranilate + diphosphate = 5-phospho-alpha-D-ribose 1-diphosphate + anthranilate. The protein operates within amino-acid biosynthesis; L-tryptophan biosynthesis; L-tryptophan from chorismate: step 2/5. In terms of biological role, catalyzes the transfer of the phosphoribosyl group of 5-phosphorylribose-1-pyrophosphate (PRPP) to anthranilate to yield N-(5'-phosphoribosyl)-anthranilate (PRA). The polypeptide is Anthranilate phosphoribosyltransferase (Shewanella loihica (strain ATCC BAA-1088 / PV-4)).